The primary structure comprises 324 residues: Glyoxylate/hydroxypyruvate reductase B (324 aa).

Active-site residues include arginine 237 and glutamate 266. The active-site Proton donor is histidine 285.

The protein belongs to the D-isomer specific 2-hydroxyacid dehydrogenase family. GhrB subfamily. As to quaternary structure, homodimer.

The protein localises to the cytoplasm. The catalysed reaction is glycolate + NADP(+) = glyoxylate + NADPH + H(+). The enzyme catalyses (R)-glycerate + NAD(+) = 3-hydroxypyruvate + NADH + H(+). It carries out the reaction (R)-glycerate + NADP(+) = 3-hydroxypyruvate + NADPH + H(+). Functionally, catalyzes the NADPH-dependent reduction of glyoxylate and hydroxypyruvate into glycolate and glycerate, respectively. The protein is Glyoxylate/hydroxypyruvate reductase B of Shigella flexneri serotype 5b (strain 8401).